Consider the following 482-residue polypeptide: C3a anaphylatoxin chemotactic receptor (482 aa).

Over 1–23 (MASFSAETNSTDLLSQPWNEPPV) the chain is Extracellular. Asn9 carries N-linked (GlcNAc...) asparagine glycosylation. The helical transmembrane segment at 24–46 (ILSMVILSLTFLLGLPGNGLVLW) threads the bilayer. Residues 47–57 (VAGLKMQRTVN) lie on the Cytoplasmic side of the membrane. A helical transmembrane segment spans residues 58–80 (TVWFLHLTLADLLCCLSLPFSLA). At 81–96 (HLALQGQWPYGRFLCE) the chain is on the extracellular side. Cys95 and Cys172 are joined by a disulfide. A helical transmembrane segment spans residues 97 to 118 (LIPSIIVLNMFASVFLLTAISL). Residues 119–139 (DRCLVVFKPIWCQNHRNVGTA) are Cytoplasmic-facing. A helical membrane pass occupies residues 140 to 160 (CSICGCIWVVAFVMCIPVFVY). The Extracellular portion of the chain corresponds to 161–340 (REIFTADNHN…TPLVAITITR (180 aa)). Tyr174 and Tyr184 each carry sulfotyrosine. Residue Asn194 is glycosylated (N-linked (GlcNAc...) asparagine). Sulfotyrosine is present on Tyr318. A helical membrane pass occupies residues 341–360 (LVVGFLLPSVIMIACYSFIV). At 361–377 (FRMQRGRFAKSQSKTFR) the chain is on the cytoplasmic side. A helical membrane pass occupies residues 378–400 (VAVVVVAVFLVCWTPYHIFGVLS). The Extracellular segment spans residues 401–417 (LLIDPESPLGKTLMSWD). A helical transmembrane segment spans residues 418-438 (HVSIALASANSCFNPFLYALL). Residues 439 to 482 (GKDFRKKARQSIQGILEAAFSEELTRSTHCNSNNVFSERNSTTV) are Cytoplasmic-facing. Ser459 bears the Phosphoserine mark. A Phosphothreonine modification is found at Thr463.

The protein belongs to the G-protein coupled receptor 1 family. As to quaternary structure, interacts with VGF-derived peptide TLQP-21. Post-translationally, among the sulfation sites Tyr-174 is essential for binding of C3a anaphylatoxin.

The protein resides in the cell membrane. Functionally, receptor for the chemotactic and inflammatory peptide anaphylatoxin C3a. This receptor stimulates chemotaxis, granule enzyme release and superoxide anion production. This chain is C3a anaphylatoxin chemotactic receptor (C3AR1), found in Pongo abelii (Sumatran orangutan).